The following is a 191-amino-acid chain: Potassium-transporting ATPase KdpC subunit (191 aa).

A helical membrane pass occupies residues 8–28 (LFLFLLLLLVTGLAYPLLTTV).

This sequence belongs to the KdpC family. As to quaternary structure, the system is composed of three essential subunits: KdpA, KdpB and KdpC.

It localises to the cell inner membrane. Its function is as follows. Part of the high-affinity ATP-driven potassium transport (or Kdp) system, which catalyzes the hydrolysis of ATP coupled with the electrogenic transport of potassium into the cytoplasm. This subunit acts as a catalytic chaperone that increases the ATP-binding affinity of the ATP-hydrolyzing subunit KdpB by the formation of a transient KdpB/KdpC/ATP ternary complex. The polypeptide is Potassium-transporting ATPase KdpC subunit (Pectobacterium atrosepticum (strain SCRI 1043 / ATCC BAA-672) (Erwinia carotovora subsp. atroseptica)).